A 310-amino-acid chain; its full sequence is NAD kinase 1 (310 aa).

Asp-68 (proton acceptor) is an active-site residue. Residues Asp-68 to Gly-69, Asn-145 to Glu-146, Arg-156, His-175, and Asp-177 contribute to the NAD(+) site.

It belongs to the NAD kinase family. A divalent metal cation is required as a cofactor.

The protein localises to the cytoplasm. It catalyses the reaction NAD(+) + ATP = ADP + NADP(+) + H(+). Functionally, involved in the regulation of the intracellular balance of NAD and NADP, and is a key enzyme in the biosynthesis of NADP. Catalyzes specifically the phosphorylation on 2'-hydroxyl of the adenosine moiety of NAD to yield NADP. The chain is NAD kinase 1 from Gloeobacter violaceus (strain ATCC 29082 / PCC 7421).